The sequence spans 984 residues: Probable beta-galactosidase C (984 aa).

The N-terminal stretch at Met-1 to Ala-23 is a signal peptide. 5 residues coordinate substrate: Tyr-82, Asn-127, Ala-128, Glu-129, and Asn-187. The Proton donor role is filled by Glu-188. Residue Asn-197 is glycosylated (N-linked (GlcNAc...) asparagine). Tyr-251 is a binding site for substrate. Cys-257 and Cys-304 form a disulfide bridge. Asn-276 carries an N-linked (GlcNAc...) asparagine glycan. The active-site Nucleophile is Glu-287. Tyr-353 is a binding site for substrate. N-linked (GlcNAc...) asparagine glycans are attached at residues Asn-391, Asn-421, Asn-434, Asn-517, Asn-602, Asn-677, Asn-715, Asn-720, Asn-759, and Asn-805.

The protein belongs to the glycosyl hydrolase 35 family.

Its subcellular location is the secreted. The enzyme catalyses Hydrolysis of terminal non-reducing beta-D-galactose residues in beta-D-galactosides.. Its function is as follows. Cleaves beta-linked terminal galactosyl residues from gangliosides, glycoproteins, and glycosaminoglycans. This Aspergillus flavus (strain ATCC 200026 / FGSC A1120 / IAM 13836 / NRRL 3357 / JCM 12722 / SRRC 167) protein is Probable beta-galactosidase C (lacC).